Reading from the N-terminus, the 134-residue chain is Small ribosomal subunit protein uS11 (134 aa).

Belongs to the universal ribosomal protein uS11 family. As to quaternary structure, part of the 30S ribosomal subunit. Interacts with proteins S7 and S18. Binds to IF-3.

Its function is as follows. Located on the platform of the 30S subunit, it bridges several disparate RNA helices of the 16S rRNA. Forms part of the Shine-Dalgarno cleft in the 70S ribosome. The polypeptide is Small ribosomal subunit protein uS11 (Paracidovorax citrulli (strain AAC00-1) (Acidovorax citrulli)).